The sequence spans 150 residues: 2-aminobenzenesulfonate 2,3-dioxygenase subunit beta (150 aa).

It belongs to the bacterial ring-hydroxylating dioxygenase beta subunit family. As to quaternary structure, heterotetramer with a alpha2beta2 structure.

The catalysed reaction is 2-aminobenzenesulfonate + NADH + O2 + 2 H(+) = 2,3-dihydroxybenzenesulfonate + NH4(+) + NAD(+). Inhibited by o-phenanthroline. In terms of biological role, beta subunit of the oxygenase component of the 2-aminobenzenesulfonate 2,3-dioxygenase system (deaminating) (ABSDOS). Can use 2-aminobenzenesulfonate (ABS), benzenesulfonate (BS), 4-toluenesulfonate (TS), 2-nitrobenzenesulfonate, 3- and 4-aminobenzenesulfonates, 4-chloro- and 4-hydroxybenzenesulfonates and pyridine-3-sulfonate as substrates. No desulfonation of ABS to aminocatechol or aminophenol detected. The chain is 2-aminobenzenesulfonate 2,3-dioxygenase subunit beta from Alcaligenes sp.